A 436-amino-acid chain; its full sequence is tRNA(Ile)-lysidine synthase (436 aa).

27 to 32 (SGGVDS) provides a ligand contact to ATP.

It belongs to the tRNA(Ile)-lysidine synthase family.

The protein localises to the cytoplasm. It catalyses the reaction cytidine(34) in tRNA(Ile2) + L-lysine + ATP = lysidine(34) in tRNA(Ile2) + AMP + diphosphate + H(+). In terms of biological role, ligates lysine onto the cytidine present at position 34 of the AUA codon-specific tRNA(Ile) that contains the anticodon CAU, in an ATP-dependent manner. Cytidine is converted to lysidine, thus changing the amino acid specificity of the tRNA from methionine to isoleucine. The chain is tRNA(Ile)-lysidine synthase from Vibrio vulnificus (strain CMCP6).